Here is a 509-residue protein sequence, read N- to C-terminus: MEEIQRYLQPDRSQQHNFLYPLIFQEYIYALAHDHGLNRNRSILLENPGYDNKFSFLIVKRLITRMYQQNHFLISTNDSNKNSFLGCNKSLYSQMISEGFAFIAEIPFSLRLMSSLSSFEGKNIFKSHNLRSIHSTFPFLEDNFSHLNYVLDILIPYPVHLEILVQTLRYWVKDASSLHLLRFFLHEYWNLNSLITSKKPGYSFSKKNQRFFFFLYNSYGYECESTFVFLRNQSSHLRSTSFGALLERIYFYGKIERLVEVFAKDFQVTLWLFKDPFMHYVRYQGKSIMASKGTFLLMNKWKFYLVNFWQCHFSLCFHTGRIHINQLSNHSRDFMGYLSSVRLNPSMVRSQMLENSFLINNAIKKFDILVPIIPLIGSLAKENFCTVLGHPISKPVWSDLSDSDIIDRFGRICRNIFHYYSGSSKKKTLYRIKYILRLSCARTLARKHKSTVRTFLKRSGSELLEEFLTSEEQVLSLTFPRASSSLWGVYRSRIWYLDIFCINDLANSQ.

It belongs to the intron maturase 2 family. MatK subfamily.

The protein resides in the plastid. The protein localises to the chloroplast. Its function is as follows. Usually encoded in the trnK tRNA gene intron. Probably assists in splicing its own and other chloroplast group II introns. The protein is Maturase K of Anthocercis viscosa (Sticky tailflower).